The primary structure comprises 441 residues: CBL-interacting serine/threonine-protein kinase 6 (441 aa).

Residues 24–278 form the Protein kinase domain; the sequence is YELGRLLGHG…IEKVMDSPWF (255 aa). ATP contacts are provided by residues 30–38 and Lys53; that span reads LGHGTFAKV. Asp146 functions as the Proton acceptor in the catalytic mechanism. Residues 164–193 are activation loop; the sequence is DFGLSAFTEHLKQDGLLHTTCGTPAYVAPE. Ser168 bears the Phosphoserine mark. A Phosphothreonine modification is found at Thr182. An NAF domain is found at 310–334; that stretch reads EETETLNAFHIIALSEGFDLSPLFE. The PPI stretch occupies residues 341–371; sequence KREMRFATSRPASSVISSLEEAARVGNKFDV.

It belongs to the protein kinase superfamily. CAMK Ser/Thr protein kinase family. SNF1 subfamily. In terms of assembly, part of a K(+)-channel calcium-sensing kinase/phosphatase complex composed by a calcium sensor CBL (CBL1, CBL2, CBL3 or CBL9), a kinase CIPK (CIPK6, CIPK16 or CIPK23), a phosphatase PP2C (AIP1) and a K(+)-channel (AKT1). Interacts with AKT1, AKT2,CBL1, CBL2, CBL3, CBL4/SOS3 and CBL9. Mn(2+) is required as a cofactor. In terms of processing, autophosphorylated. As to expression, expressed in roots and shoots.

It is found in the endoplasmic reticulum. The catalysed reaction is L-seryl-[protein] + ATP = O-phospho-L-seryl-[protein] + ADP + H(+). It carries out the reaction L-threonyl-[protein] + ATP = O-phospho-L-threonyl-[protein] + ADP + H(+). Functionally, CIPK serine-threonine protein kinases interact with CBL proteins. Binding of a CBL protein to the regulatory NAF domain of CIPK protein lead to the activation of the kinase in a calcium-dependent manner. Downstream of CBL1, CBL2, CBL3 and CBL9, regulates by phosphorylation the K(+) conductance and uptake of AKT1. Binds to CBL4 to modulate AKT2 activity by promoting a kinase interaction-dependent but phosphorylation-independent translocation of the channel to the plasma membrane. The chain is CBL-interacting serine/threonine-protein kinase 6 (CIPK6) from Arabidopsis thaliana (Mouse-ear cress).